A 431-amino-acid polypeptide reads, in one-letter code: Trigger factor (431 aa).

One can recognise a PPIase FKBP-type domain in the interval 160-245 (DDRVTIDFVG…VKKVEVMVLP (86 aa)).

This sequence belongs to the FKBP-type PPIase family. Tig subfamily.

It is found in the cytoplasm. The catalysed reaction is [protein]-peptidylproline (omega=180) = [protein]-peptidylproline (omega=0). In terms of biological role, involved in protein export. Acts as a chaperone by maintaining the newly synthesized protein in an open conformation. Functions as a peptidyl-prolyl cis-trans isomerase. The chain is Trigger factor from Mannheimia succiniciproducens (strain KCTC 0769BP / MBEL55E).